The primary structure comprises 623 residues: Xaa-Pro aminopeptidase 1 (623 aa).

Arg-77 serves as a coordination point for a peptide. The residue at position 304 (Lys-304) is an N6-acetyllysine. His-395 provides a ligand contact to a peptide. Mn(2+) contacts are provided by Asp-415, Asp-426, and His-489. Residues His-489, His-498, and Glu-523 each contribute to the a peptide site. 2 residues coordinate Mn(2+): Glu-523 and Glu-537.

The protein belongs to the peptidase M24B family. In terms of assembly, homodimer. Requires Mn(2+) as cofactor.

Its subcellular location is the cytoplasm. The protein resides in the cytosol. The catalysed reaction is Release of any N-terminal amino acid, including proline, that is linked to proline, even from a dipeptide or tripeptide.. Functionally, metalloaminopeptidase that catalyzes the removal of a penultimate prolyl residue from the N-termini of peptides, such as Arg-Pro-Pro. Contributes to the degradation of bradykinin. This chain is Xaa-Pro aminopeptidase 1 (XPNPEP1), found in Bos taurus (Bovine).